We begin with the raw amino-acid sequence, 342 residues long: L-threonine 3-dehydrogenase (342 aa).

Cysteine 38 is a Zn(2+) binding site. Catalysis depends on charge relay system residues threonine 40 and histidine 43. Zn(2+) contacts are provided by histidine 63, glutamate 64, cysteine 93, cysteine 96, cysteine 99, and cysteine 107. NAD(+) is bound by residues isoleucine 175, aspartate 195, arginine 200, 262–264 (LGI), and 286–287 (IY).

It belongs to the zinc-containing alcohol dehydrogenase family. Homotetramer. It depends on Zn(2+) as a cofactor.

The protein localises to the cytoplasm. The enzyme catalyses L-threonine + NAD(+) = (2S)-2-amino-3-oxobutanoate + NADH + H(+). It functions in the pathway amino-acid degradation; L-threonine degradation via oxydo-reductase pathway; glycine from L-threonine: step 1/2. Functionally, catalyzes the NAD(+)-dependent oxidation of L-threonine to 2-amino-3-ketobutyrate. The polypeptide is L-threonine 3-dehydrogenase (Burkholderia cenocepacia (strain HI2424)).